Here is a 119-residue protein sequence, read N- to C-terminus: uncharacterized protein (119 aa).

The interval 55–119 is disordered; the sequence is LSTEPPTPPS…SRLPPRSWTN (65 aa). Residues 81–92 show a composition bias toward polar residues; sequence LSYTRCHSTTYT.

This is an uncharacterized protein from Saccharomyces cerevisiae (strain ATCC 204508 / S288c) (Baker's yeast).